The sequence spans 690 residues: Probable serine/threonine-protein kinase drkB (690 aa).

An N-terminal signal peptide occupies residues 1–24; sequence MKVQIVFFSITVFIFVLFLLSVES. The tract at residues 51–110 is disordered; sequence DSKSSEHTTSSSSSSNSKNKGDSSSSSSNSGSSSNSIISGDSNSKDAPTTSSDSLSPATP. A compositionally biased stretch (low complexity) spans 57–96; that stretch reads HTTSSSSSSNSKNKGDSSSSSSNSGSSSNSIISGDSNSKD. Residues 97–107 are compositionally biased toward polar residues; the sequence is APTTSSDSLSP. Asn134, Asn180, Asn220, and Asn250 each carry an N-linked (GlcNAc...) asparagine glycan. The interval 287-335 is disordered; sequence TITPTPTITPTPTITPTVTPTATPSTTPSTTPTTTPSTPTPTPTKSPYS. The span at 296–323 shows a compositional bias: low complexity; the sequence is PTPTITPTVTPTATPSTTPSTTPTTTPS. The helical transmembrane segment at 346 to 366 threads the bilayer; the sequence is IIIASSITGGLLISIFSFVFI. One can recognise a Protein kinase domain in the interval 391 to 644; it reads IKIGVRIGKG…EQCLEILESI (254 aa). Residues 397–405 and Lys418 contribute to the ATP site; that span reads IGKGNFGEV. Asp514 (proton acceptor) is an active-site residue. Residues 649 to 690 are disordered; the sequence is FDDIPVNNNNNNNSNNNENNNENNNNSDNNNNDINYSNRVIN. The span at 655-681 shows a compositional bias: low complexity; sequence NNNNNNNSNNNENNNENNNNSDNNNND.

The protein belongs to the protein kinase superfamily. TKL Ser/Thr protein kinase family.

It localises to the membrane. It carries out the reaction L-seryl-[protein] + ATP = O-phospho-L-seryl-[protein] + ADP + H(+). It catalyses the reaction L-threonyl-[protein] + ATP = O-phospho-L-threonyl-[protein] + ADP + H(+). The chain is Probable serine/threonine-protein kinase drkB (drkB) from Dictyostelium discoideum (Social amoeba).